The chain runs to 146 residues: General odorant-binding protein 19a (146 aa).

Residues 1-22 (MKFHLLLVCVAISLGPIPQSEA) form the signal peptide. 3 disulfide bridges follow: cysteine 40-cysteine 72, cysteine 68-cysteine 126, and cysteine 113-cysteine 135.

The protein belongs to the PBP/GOBP family. In terms of tissue distribution, expressed in adult olfactory system. Expressed exclusively in a subset of chemosensory sensilla on the third antennal segment.

It localises to the secreted. Functionally, present in the aqueous fluid surrounding olfactory sensory dendrites and are thought to aid in the capture and transport of hydrophobic odorants into and through this fluid. The chain is General odorant-binding protein 19a (Obp19a) from Drosophila melanogaster (Fruit fly).